Here is a 142-residue protein sequence, read N- to C-terminus: MKTISAKFEASQRKWILVDAENQVLGRLASRIAMRLRGKHLPAFTPHVDLGDFVVVINADKVQLTGNKWDQKLYYRHSGYMGGVKVQSARKLNAGNPEKLLRLAVWGMLPKNRLGRKLIKKLKVYKGAEHPHEAQQPTRIAL.

Belongs to the universal ribosomal protein uL13 family. Part of the 50S ribosomal subunit.

Its function is as follows. This protein is one of the early assembly proteins of the 50S ribosomal subunit, although it is not seen to bind rRNA by itself. It is important during the early stages of 50S assembly. The protein is Large ribosomal subunit protein uL13 of Syntrophobacter fumaroxidans (strain DSM 10017 / MPOB).